Consider the following 338-residue polypeptide: MIMKALVLEKAGKIAIQDWQSNEVLGDDDVEIKIHTVGICGSDVHYYQHGRIGPFVVDEPMVLGHEASGVITAAGKNVKHLKVGDRVCMEPGIPDLQSPQSRAGIYNLDPAVRFWATPPIDGCLRESVIHPAAFTFKLPDNVSFAQGAMVEPLAIGMQSATKAGIKPGDIGLVIGAGTIGIITQSALAGGCSDVIICDVFDEKLKVAEKYQGLHAVNSKDQQALADKVRELTGGEGVNVLFECSGAKPVIASISDHIAPGGTAVLVGMPIDPAPLDIVAAQAKEVTFKTILRYANMYPRTIRLLSSGKLNVAPLLSATYKFKDSVEAYERAAEPVRLM.

Zn(2+) contacts are provided by cysteine 40, histidine 65, and glutamate 151.

This sequence belongs to the zinc-containing alcohol dehydrogenase family. In terms of assembly, homotetramer. Zn(2+) is required as a cofactor.

It carries out the reaction xylitol + NAD(+) = D-xylulose + NADH + H(+). In Morganella morganii (Proteus morganii), this protein is D-xylulose reductase.